The sequence spans 350 residues: Lipase chaperone (350 aa).

The helical transmembrane segment at 12–32 threads the bilayer; the sequence is IVLYLILGCVVVCGVWYSFDV.

The protein belongs to the lipase chaperone family.

Its subcellular location is the cell inner membrane. In terms of biological role, may be involved in the folding of the extracellular lipase during its passage through the periplasm. The protein is Lipase chaperone (lifO) of Xylella fastidiosa (strain 9a5c).